Consider the following 332-residue polypeptide: 5-dehydro-2-deoxygluconokinase (332 aa).

This sequence belongs to the carbohydrate kinase PfkB family.

It carries out the reaction 5-dehydro-2-deoxy-D-gluconate + ATP = 6-phospho-5-dehydro-2-deoxy-D-gluconate + ADP + H(+). Its pathway is polyol metabolism; myo-inositol degradation into acetyl-CoA; acetyl-CoA from myo-inositol: step 5/7. In terms of biological role, catalyzes the phosphorylation of 5-dehydro-2-deoxy-D-gluconate (2-deoxy-5-keto-D-gluconate or DKG) to 6-phospho-5-dehydro-2-deoxy-D-gluconate (DKGP). This Bacillus thuringiensis subsp. konkukian (strain 97-27) protein is 5-dehydro-2-deoxygluconokinase.